The chain runs to 208 residues: Large ribosomal subunit protein uL4 (208 aa).

A disordered region spans residues 42–77; that stretch reads SMRQGTHKTKTKTEVSGGGRKPWRQKGTGRARQGSI.

It belongs to the universal ribosomal protein uL4 family. In terms of assembly, part of the 50S ribosomal subunit.

One of the primary rRNA binding proteins, this protein initially binds near the 5'-end of the 23S rRNA. It is important during the early stages of 50S assembly. It makes multiple contacts with different domains of the 23S rRNA in the assembled 50S subunit and ribosome. In terms of biological role, forms part of the polypeptide exit tunnel. The chain is Large ribosomal subunit protein uL4 from Spiroplasma kunkelii.